Reading from the N-terminus, the 822-residue chain is Fibroblast growth factor receptor 1 (822 aa).

The first 21 residues, Met1 to Ala21, serve as a signal peptide directing secretion. Over Arg22–Glu376 the chain is Extracellular. Residues Pro25 to Ser119 form the Ig-like C2-type 1 domain. An intrachain disulfide couples Cys55 to Cys101. N-linked (GlcNAc...) asparagine glycosylation is found at Asn77 and Asn117. The segment at Asp120–Glu162 is disordered. Residues Ser125 to Ser135 are compositionally biased toward acidic residues. Positions Ser136–Lys145 are enriched in basic and acidic residues. Ig-like C2-type domains lie at Pro158–Asp246 and Pro255–Thr357. Residues Lys160–Lys177 form a heparin-binding region. Residues Cys178 and Cys230 are joined by a disulfide bond. N-linked (GlcNAc...) asparagine glycosylation is found at Asn227, Asn240, Asn264, Asn296, Asn317, and Asn330. Cys277 and Cys341 are oxidised to a cystine. A helical membrane pass occupies residues Ile377–Tyr397. Residues Lys398–Arg822 lie on the Cytoplasmic side of the membrane. Residue Tyr463 is modified to Phosphotyrosine; by autocatalysis. The Protein kinase domain occupies Leu478 to Leu767. Residues Leu484 to Gly490, Lys514, Glu562 to Ala564, and Asn568 contribute to the ATP site. A phosphotyrosine; by autocatalysis mark is found at Tyr583 and Tyr585. Catalysis depends on Asp623, which acts as the Proton acceptor. Residues Arg627 and Asp641 each contribute to the ATP site. Residues Tyr653, Tyr654, Tyr730, and Tyr766 each carry the phosphotyrosine; by autocatalysis modification. A compositionally biased stretch (polar residues) spans Asp782–Glu792. Positions Asp782–Arg822 are disordered.

It belongs to the protein kinase superfamily. Tyr protein kinase family. Fibroblast growth factor receptor subfamily. In terms of assembly, monomer. Homodimer after ligand binding. Interacts predominantly with FGF1 and FGF2, but can also interact with FGF3, FGF4, FGF5, FGF6, FGF8, FGF10, FGF19, FGF21, FGF22 and FGF23 (in vitro). Ligand specificity is determined by tissue-specific expression of isoforms, and differences in the third Ig-like domain are crucial for ligand specificity. Affinity for fibroblast growth factors (FGFs) is increased by heparan sulfate glycosaminoglycans that function as coreceptors. Likewise, KLB increases the affinity for FGF19, FGF21 and FGF23. Interacts (phosphorylated on Tyr-766) with PLCG1 (via SH2 domains). Interacts with FRS2. Interacts with RPS6KA1. Interacts (via C-terminus) with NEDD4 (via WW3 domain). Interacts with KL. Interacts with SHB (via SH2 domain). Interacts with GRB10. Interacts with ANOS1; this interaction does not interfere with FGF2-binding to FGFR1, but prevents binding of heparin-bound FGF2. Interacts with SOX2 and SOX3. Interacts with FLRT1, FLRT2 and FLRT3. Found in a ternary complex with FGF1 and ITGAV:ITGB3. In terms of processing, autophosphorylated. Binding of FGF family members together with heparan sulfate proteoglycan or heparin promotes receptor dimerization and autophosphorylation on tyrosine residues. Autophosphorylation occurs in trans between the two FGFR molecules present in the dimer and proceeds in a highly ordered manner. Initial autophosphorylation at Tyr-653 increases the kinase activity by a factor of 50 to 100. After this, Tyr-583 becomes phosphorylated, followed by phosphorylation of Tyr-463, Tyr-766, Tyr-583 and Tyr-585. In a third stage, Tyr-654 is autophosphorylated, resulting in a further tenfold increase of kinase activity. Phosphotyrosine residues provide docking sites for interacting proteins and so are crucial for FGFR1 function and its regulation. Ubiquitinated. FGFR1 is rapidly ubiquitinated by NEDD4 after autophosphorylation, leading to internalization and lysosomal degradation. CBL is recruited to activated FGFR1 via FRS2 and GRB2, and mediates ubiquitination and subsequent degradation of FGFR1. Post-translationally, N-glycosylated in the endoplasmic reticulum. The N-glycan chains undergo further maturation to an Endo H-resistant form in the Golgi apparatus. In terms of tissue distribution, widely expressed.

It is found in the cell membrane. The protein resides in the nucleus. It localises to the cytoplasm. The protein localises to the cytosol. Its subcellular location is the cytoplasmic vesicle. The catalysed reaction is L-tyrosyl-[protein] + ATP = O-phospho-L-tyrosyl-[protein] + ADP + H(+). Present in an inactive conformation in the absence of bound ligand. Ligand binding leads to dimerization and activation by sequential autophosphorylation on tyrosine residues. Functionally, tyrosine-protein kinase that acts as a cell-surface receptor for fibroblast growth factors and plays an essential role in the regulation of embryonic development, cell proliferation, differentiation and migration. Required for normal mesoderm patterning and correct axial organization during embryonic development, normal skeletogenesis and normal development of the gonadotropin-releasing hormone (GnRH) neuronal system. Phosphorylates PLCG1, FRS2, GAB1 and SHB. Ligand binding leads to the activation of several signaling cascades. Activation of PLCG1 leads to the production of the cellular signaling molecules diacylglycerol and inositol 1,4,5-trisphosphate. Phosphorylation of FRS2 triggers recruitment of GRB2, GAB1, PIK3R1 and SOS1, and mediates activation of RAS, MAPK1/ERK2, MAPK3/ERK1 and the MAP kinase signaling pathway, as well as of the AKT1 signaling pathway. Promotes phosphorylation of SHC1, STAT1 and PTPN11/SHP2. In the nucleus, enhances RPS6KA1 and CREB1 activity and contributes to the regulation of transcription. FGFR1 signaling is down-regulated by IL17RD/SEF, and by FGFR1 ubiquitination, internalization and degradation. The sequence is that of Fibroblast growth factor receptor 1 (Fgfr1) from Mus musculus (Mouse).